The chain runs to 432 residues: MSALRNQDPEIHDVIQKEVQRQNDGLELIASENFASRAVMEAMGTALTNKYAEGLPGKRYYGGCEVVDRAEELARERAKELYDCDWVNVQPHAGAQANSAVYLTLLDPGDTFLGLDLSHGGHLTHGSPVNFSGILYEAEYYGVEEETGRIDMNRVRDRAKEVQPKMISIGASAYPRDFDYEAFREIADEVGAFLWMDMAHTAGLIAGGVLNDPMPHTHVVTTTTHKTLRGPRGGMILLGDDYENPMGKTARKSGRTKMMSELLDSAVFPGTQGGPLMHVIAAKAVGFKEALKPSFAEYTQQVVDNAQAMGAELRERGYDLVSDGTDNHLVLIDLRNKGLTGKEAEQALEAAGITANKNMVPFDDKSPFVTSGLRLGTPAMTTRGFGPDEFAHVAEMIDRVLQDPEDEDTQAAVEREVKALCDQHPLYDVAMA.

Residues leucine 117 and 121–123 (GHL) each bind (6S)-5,6,7,8-tetrahydrofolate. At lysine 226 the chain carries N6-(pyridoxal phosphate)lysine. A (6S)-5,6,7,8-tetrahydrofolate-binding site is contributed by 366–368 (SPF).

It belongs to the SHMT family. In terms of assembly, homodimer. Requires pyridoxal 5'-phosphate as cofactor.

Its subcellular location is the cytoplasm. The catalysed reaction is (6R)-5,10-methylene-5,6,7,8-tetrahydrofolate + glycine + H2O = (6S)-5,6,7,8-tetrahydrofolate + L-serine. The protein operates within one-carbon metabolism; tetrahydrofolate interconversion. Its pathway is amino-acid biosynthesis; glycine biosynthesis; glycine from L-serine: step 1/1. In terms of biological role, catalyzes the reversible interconversion of serine and glycine with tetrahydrofolate (THF) serving as the one-carbon carrier. This reaction serves as the major source of one-carbon groups required for the biosynthesis of purines, thymidylate, methionine, and other important biomolecules. Also exhibits THF-independent aldolase activity toward beta-hydroxyamino acids, producing glycine and aldehydes, via a retro-aldol mechanism. The polypeptide is Serine hydroxymethyltransferase (Salinibacter ruber (strain DSM 13855 / M31)).